The sequence spans 498 residues: N-acyl-D-aspartate deacylase (498 aa).

The disordered stretch occupies residues 478–498 (AERPGQVLAPGDAIPWSQQSE).

This sequence belongs to the metallo-dependent hydrolases superfamily. N-acyl-D-amino-acid deacylase family. Zn(2+) is required as a cofactor.

The protein localises to the cytoplasm. The enzyme catalyses an N-acyl-D-aspartate + H2O = D-aspartate + a carboxylate. In Alcaligenes xylosoxydans xylosoxydans (Achromobacter xylosoxidans), this protein is N-acyl-D-aspartate deacylase.